The following is a 300-amino-acid chain: Protein YIF1B (300 aa).

The disordered stretch occupies residues 1–46 (MNQESSFRAPPKRRVRGPNPNISTPHQLFDDTSGGPVPHGGEYPNH). At 1 to 142 (MNQESSFRAP…APRFDINAPD (142 aa)) the chain is on the cytoplasmic side. A helical transmembrane segment spans residues 143–163 (LYIPVMAFITYILVAGLALGT). At 164-178 (QSRFSPEILGMQASS) the chain is on the extracellular side. A helical transmembrane segment spans residues 179–199 (ALAWLIVEVLAILLSLYLVTV). Over 200–205 (NTDLTT) the chain is Cytoplasmic. The helical transmembrane segment at 206-226 (VDLVAFSGYKYVGMISGVISG) threads the bilayer. A topological domain (extracellular) is located at residue Leu227. Residues 228–248 (LFGKTGYYVVLSWCGISVVFF) traverse the membrane as a helical segment. The Cytoplasmic portion of the chain corresponds to 249-278 (MIRTLRLKILSEAAAEGVLVRGARNQLRMY). The helical transmembrane segment at 279–299 (LTMAIAAVQPIFMYWLTYHLV) threads the bilayer. Arg300 is a topological domain (extracellular).

This sequence belongs to the YIF1 family.

The protein resides in the endoplasmic reticulum membrane. Its subcellular location is the golgi apparatus membrane. It localises to the endoplasmic reticulum-Golgi intermediate compartment membrane. Functionally, functions in endoplasmic reticulum to Golgi vesicle-mediated transport and regulates the proper organization of the endoplasmic reticulum and the Golgi. Plays a key role in targeting to neuronal dendrites receptors such as HTR1A. Plays also a role in primary cilium and sperm flagellum assembly probably through protein transport to these compartments. The sequence is that of Protein YIF1B (yif1b) from Xenopus tropicalis (Western clawed frog).